The sequence spans 578 residues: Synaptic defective enhancer 1 (578 aa).

Disordered regions lie at residues 1 to 62, 173 to 216, 426 to 457, and 474 to 578; these read MGEP…RKET, SEQA…SMDQ, PPLP…VSSA, and LGLH…FSNF. A compositionally biased stretch (low complexity) spans 444-455; that stretch reads PAAPVPASVPVS. 2 stretches are compositionally biased toward pro residues: residues 481 to 491 and 500 to 542; these read PPPPPPPPPPT and IPPP…PNPN. The span at 565 to 578 shows a compositional bias: low complexity; that stretch reads NQFPPQQQQSFSNF.

May interact (via C-terminus) with ssup-72; the interaction may prevent ssup-72 binding to RNA polymerase II subunit ama-1. Expressed in germline, oocytes, epidermis, pharyngeal bulb and neurons.

The protein resides in the nucleus. Its subcellular location is the nucleus speckle. Acts as a negative regulator of nuclear pre-mRNA 3'-end processing (mRNA polyadenylation). Plays a role in tissue-specific expression of protein isoforms by regulating differential processing of pre-mRNA 3'-end (alternative polyadenylation). In neurons, regulates alternative polyadenylation of specific mRNAs including unc-44 and dlk-1 by interacting with phosphatase ssup-72 and thus preventing ssup-72 dephosphorylation of RNA polymerase II subunit ama-1. Specifically, alters the usage of internal polyadenylation sites (PAS) to promote the production of neuron-specific unc-44 isoform and dlk-1 isoform c, both required for normal synapse and axon development. Conversely, in the epidermis, by inhibiting ssup-72 function, promotes the usage of an internal PAS preventing the production of one of unc-44 isoforms. In neurons, also negatively regulates protein levels of pre-RNA processing protein psf-2. In Caenorhabditis elegans, this protein is Synaptic defective enhancer 1.